A 401-amino-acid chain; its full sequence is Imidazolonepropionase (401 aa).

Residues His70 and His72 each coordinate Fe(3+). Residues His70 and His72 each coordinate Zn(2+). 4-imidazolone-5-propanoate-binding residues include Arg79, Tyr142, and His175. Tyr142 is a binding site for N-formimidoyl-L-glutamate. Position 240 (His240) interacts with Fe(3+). His240 lines the Zn(2+) pocket. Gln243 provides a ligand contact to 4-imidazolone-5-propanoate. Asp315 lines the Fe(3+) pocket. A Zn(2+)-binding site is contributed by Asp315. N-formimidoyl-L-glutamate-binding residues include Asn317 and Gly319. Ser320 contributes to the 4-imidazolone-5-propanoate binding site.

The protein belongs to the metallo-dependent hydrolases superfamily. HutI family. The cofactor is Zn(2+). Requires Fe(3+) as cofactor.

The protein resides in the cytoplasm. The catalysed reaction is 4-imidazolone-5-propanoate + H2O = N-formimidoyl-L-glutamate. It participates in amino-acid degradation; L-histidine degradation into L-glutamate; N-formimidoyl-L-glutamate from L-histidine: step 3/3. In terms of biological role, catalyzes the hydrolytic cleavage of the carbon-nitrogen bond in imidazolone-5-propanoate to yield N-formimidoyl-L-glutamate. It is the third step in the universal histidine degradation pathway. This is Imidazolonepropionase from Ruegeria pomeroyi (strain ATCC 700808 / DSM 15171 / DSS-3) (Silicibacter pomeroyi).